Reading from the N-terminus, the 185-residue chain is Transmembrane protein 140 (185 aa).

Over 1–11 (MAGPRPRWRDQ) the chain is Cytoplasmic. A helical transmembrane segment spans residues 12 to 32 (LLFMSIIVLVIVVICLMFYAL). Residues 33–77 (LWEAGNLTDLPNLRIGFYNFCLWNEDTSTLQCHQFPELEALGVPR) lie on the Extracellular side of the membrane. Asparagine 38 is a glycosylation site (N-linked (GlcNAc...) asparagine). Residues 78–98 (VGLGLARLGVYGSLVLTLFAP) form a helical membrane-spanning segment. Over 99 to 114 (QPLLLAQCNSDERAWR) the chain is Cytoplasmic. A helical transmembrane segment spans residues 115–135 (LAVGFLAVSSVLLAGGLGLFL). Residues 136 to 150 (SYVWKWVRLSLPGPG) are Extracellular-facing. Residues 151-171 (FLALGSAQALLILLLIAMAVF) traverse the membrane as a helical segment. At 172-185 (PLRAERAESKLESC) the chain is on the cytoplasmic side.

Expression significantly higher in gliomas than in normal brain tissues.

The protein localises to the membrane. This chain is Transmembrane protein 140 (TMEM140), found in Homo sapiens (Human).